Consider the following 504-residue polypeptide: Deoxyguanosinetriphosphate triphosphohydrolase (504 aa).

The region spanning 66 to 273 (RLTHSLEVQQ…MEAADDISYC (208 aa)) is the HD domain.

Belongs to the dGTPase family. Type 1 subfamily. Homotetramer. Requires Mg(2+) as cofactor.

It catalyses the reaction dGTP + H2O = 2'-deoxyguanosine + triphosphate + H(+). DGTPase preferentially hydrolyzes dGTP over the other canonical NTPs. The sequence is that of Deoxyguanosinetriphosphate triphosphohydrolase from Klebsiella pneumoniae (strain 342).